The chain runs to 437 residues: D-aminoacyl-tRNA deacylase (437 aa).

This sequence belongs to the DtdA deacylase family. In terms of assembly, monomer. Zn(2+) is required as a cofactor.

It catalyses the reaction a D-aminoacyl-tRNA + H2O = a tRNA + a D-alpha-amino acid + H(+). The enzyme catalyses glycyl-tRNA(Ala) + H2O = tRNA(Ala) + glycine + H(+). D-aminoacyl-tRNA deacylase with broad substrate specificity. By recycling D-aminoacyl-tRNA to D-amino acids and free tRNA molecules, this enzyme counteracts the toxicity associated with the formation of D-aminoacyl-tRNA entities in vivo. This is D-aminoacyl-tRNA deacylase from Methanoculleus marisnigri (strain ATCC 35101 / DSM 1498 / JR1).